Reading from the N-terminus, the 198-residue chain is Recombination protein RecR (198 aa).

The C4-type zinc-finger motif lies at 57–72 (CLNCGCLTDEAACYFC). The 96-residue stretch at 80–175 (QIICVTAFPR…QISRLAFGLP (96 aa)) folds into the Toprim domain.

Belongs to the RecR family.

May play a role in DNA repair. It seems to be involved in an RecBC-independent recombinational process of DNA repair. It may act with RecF and RecO. The chain is Recombination protein RecR from Protochlamydia amoebophila (strain UWE25).